The sequence spans 269 residues: Transcription factor MYB7 (269 aa).

2 consecutive HTH myb-type domains span residues Lys9–Leu61 and Arg62–Leu116. DNA-binding regions (H-T-H motif) lie at residues Trp37–Leu61 and Trp89–Ile112.

In terms of assembly, interacts with SAD2. Expressed in anthers. Expressed in pollen grains and mature seeds. Expressed in roots and vasculature of leaves.

The protein localises to the nucleus. Its function is as follows. Transcription factor involved in the negative regulation of flavonol biosynthesis. Represses the early phenylpropanoid genes, phenylalanine ammonia-lyase (PAL), cinnamate 4-hydroxylase (C4H) and 4-coumarate-CoA ligase (4CL), as well as the flavonoid-specific genes, flavonoid 3'-hydroxylase (F3'H) and dihydroflavonol 4-reductase (DFR). Plays a role in seed germination inhibition. Negatively regulates the expression of the abscisic acid (ABA) signaling transcription factor ABI5 in seeds. The chain is Transcription factor MYB7 from Arabidopsis thaliana (Mouse-ear cress).